The primary structure comprises 258 residues: Tryptophan synthase alpha chain (258 aa).

Active-site proton acceptor residues include E50 and D61.

Belongs to the TrpA family. Tetramer of two alpha and two beta chains.

The catalysed reaction is (1S,2R)-1-C-(indol-3-yl)glycerol 3-phosphate + L-serine = D-glyceraldehyde 3-phosphate + L-tryptophan + H2O. Its pathway is amino-acid biosynthesis; L-tryptophan biosynthesis; L-tryptophan from chorismate: step 5/5. The alpha subunit is responsible for the aldol cleavage of indoleglycerol phosphate to indole and glyceraldehyde 3-phosphate. This Clostridium beijerinckii (strain ATCC 51743 / NCIMB 8052) (Clostridium acetobutylicum) protein is Tryptophan synthase alpha chain.